Consider the following 492-residue polypeptide: Transcript termination protein A18 (492 aa).

A Helicase ATP-binding domain is found at 100–256 (MIELKRPLYI…NSIINIAKLS (157 aa)). 113 to 120 (LACGFGKT) is a binding site for ATP. The DESH box signature appears at 206-209 (DESH).

It belongs to the helicase family. Poxviruses subfamily. Interacts with G2. Might be part of a transcription complex composed at least of G2, A18, and H5.

It is found in the virion. In terms of biological role, DNA helicase which seems to act as a postreplicative transcription termination factor. Involved in ATP-dependent release of nascent RNA. Forms a stable complex with single-stranded DNA, and to a lesser extent RNA. The sequence is that of Transcript termination protein A18 from Bos taurus (Bovine).